Here is a 456-residue protein sequence, read N- to C-terminus: UDP-N-acetylmuramoylalanine--D-glutamate ligase (456 aa).

Residue 113–119 (GTNGKTT) participates in ATP binding.

The protein belongs to the MurCDEF family.

Its subcellular location is the cytoplasm. It carries out the reaction UDP-N-acetyl-alpha-D-muramoyl-L-alanine + D-glutamate + ATP = UDP-N-acetyl-alpha-D-muramoyl-L-alanyl-D-glutamate + ADP + phosphate + H(+). The protein operates within cell wall biogenesis; peptidoglycan biosynthesis. In terms of biological role, cell wall formation. Catalyzes the addition of glutamate to the nucleotide precursor UDP-N-acetylmuramoyl-L-alanine (UMA). This Crocosphaera subtropica (strain ATCC 51142 / BH68) (Cyanothece sp. (strain ATCC 51142)) protein is UDP-N-acetylmuramoylalanine--D-glutamate ligase.